The primary structure comprises 44 residues: Photosystem I reaction center subunit IX (44 aa).

Residues 7 to 27 (YLSVAPVLSTLWFGSLAGLLI) form a helical membrane-spanning segment.

It belongs to the PsaJ family.

The protein resides in the plastid. It localises to the chloroplast thylakoid membrane. In terms of biological role, may help in the organization of the PsaE and PsaF subunits. This Arabis hirsuta (Hairy rock-cress) protein is Photosystem I reaction center subunit IX.